We begin with the raw amino-acid sequence, 80 residues long: Large ribosomal subunit protein eL38 (80 aa).

This sequence belongs to the eukaryotic ribosomal protein eL38 family. As to quaternary structure, component of the large ribosomal subunit (LSU). Mature N.crassa ribosomes consist of a small (40S) and a large (60S) subunit. The 40S small subunit contains 1 molecule of ribosomal RNA (18S rRNA) and at least 32 different proteins. The large 60S subunit contains 3 rRNA molecules (26S, 5.8S and 5S rRNA) and at least 42 different proteins.

It is found in the cytoplasm. Component of the ribosome, a large ribonucleoprotein complex responsible for the synthesis of proteins in the cell. The small ribosomal subunit (SSU) binds messenger RNAs (mRNAs) and translates the encoded message by selecting cognate aminoacyl-transfer RNA (tRNA) molecules. The large subunit (LSU) contains the ribosomal catalytic site termed the peptidyl transferase center (PTC), which catalyzes the formation of peptide bonds, thereby polymerizing the amino acids delivered by tRNAs into a polypeptide chain. The nascent polypeptides leave the ribosome through a tunnel in the LSU and interact with protein factors that function in enzymatic processing, targeting, and the membrane insertion of nascent chains at the exit of the ribosomal tunnel. In Neurospora crassa (strain ATCC 24698 / 74-OR23-1A / CBS 708.71 / DSM 1257 / FGSC 987), this protein is Large ribosomal subunit protein eL38 (rpl-38).